Reading from the N-terminus, the 2253-residue chain is Protein Ycf2 (2253 aa).

1600–1607 (GFIGTGRS) contacts ATP.

This sequence belongs to the Ycf2 family.

The protein localises to the plastid. It localises to the chloroplast stroma. In terms of biological role, probable ATPase of unknown function. Its presence in a non-photosynthetic plant (Epifagus virginiana) and experiments in tobacco indicate that it has an essential function which is probably not related to photosynthesis. This chain is Protein Ycf2, found in Nymphaea alba (White water-lily).